Reading from the N-terminus, the 191-residue chain is Holliday junction branch migration complex subunit RuvA (191 aa).

The domain I stretch occupies residues methionine 1–alanine 64. Residues threonine 65–histidine 140 are domain II. The flexible linker stretch occupies residues histidine 140 to proline 142. Positions alanine 143–lysine 191 are domain III.

Belongs to the RuvA family. In terms of assembly, homotetramer. Forms an RuvA(8)-RuvB(12)-Holliday junction (HJ) complex. HJ DNA is sandwiched between 2 RuvA tetramers; dsDNA enters through RuvA and exits via RuvB. An RuvB hexamer assembles on each DNA strand where it exits the tetramer. Each RuvB hexamer is contacted by two RuvA subunits (via domain III) on 2 adjacent RuvB subunits; this complex drives branch migration. In the full resolvosome a probable DNA-RuvA(4)-RuvB(12)-RuvC(2) complex forms which resolves the HJ.

The protein resides in the cytoplasm. The RuvA-RuvB-RuvC complex processes Holliday junction (HJ) DNA during genetic recombination and DNA repair, while the RuvA-RuvB complex plays an important role in the rescue of blocked DNA replication forks via replication fork reversal (RFR). RuvA specifically binds to HJ cruciform DNA, conferring on it an open structure. The RuvB hexamer acts as an ATP-dependent pump, pulling dsDNA into and through the RuvAB complex. HJ branch migration allows RuvC to scan DNA until it finds its consensus sequence, where it cleaves and resolves the cruciform DNA. This Verminephrobacter eiseniae (strain EF01-2) protein is Holliday junction branch migration complex subunit RuvA.